We begin with the raw amino-acid sequence, 393 residues long: Probable pectinesterase 8 (393 aa).

Residues 1–19 (MKIISLSISIGIAIIAVLA) form the signal peptide. N-linked (GlcNAc...) asparagine glycans are attached at residues Asn100, Asn113, Asn140, Asn156, and Asn163. Residue Thr165 participates in substrate binding. Asn182 is a glycosylation site (N-linked (GlcNAc...) asparagine). Gln200 lines the substrate pocket. Asp223 functions as the Proton donor in the catalytic mechanism. Asp244 (nucleophile) is an active-site residue. An N-linked (GlcNAc...) asparagine glycan is attached at Asn295. Substrate is bound at residue Arg308. 3 N-linked (GlcNAc...) asparagine glycosylation sites follow: Asn350, Asn369, and Asn378.

The protein belongs to the pectinesterase family. In terms of tissue distribution, expressed in siliques.

It is found in the secreted. The protein localises to the cell wall. It carries out the reaction [(1-&gt;4)-alpha-D-galacturonosyl methyl ester](n) + n H2O = [(1-&gt;4)-alpha-D-galacturonosyl](n) + n methanol + n H(+). The protein operates within glycan metabolism; pectin degradation; 2-dehydro-3-deoxy-D-gluconate from pectin: step 1/5. Its function is as follows. Acts in the modification of cell walls via demethylesterification of cell wall pectin. In Arabidopsis thaliana (Mouse-ear cress), this protein is Probable pectinesterase 8 (PME8).